The sequence spans 359 residues: Peroxisome assembly protein 12 (359 aa).

Residues 1 to 24 (MSTTIRASQLASSISPKTEEKQPS) lie on the Peroxisomal matrix side of the membrane. A helical transmembrane segment spans residues 25 to 52 (VFDIIAQENLATSIRPALQHLVKYLAFF). At 53–56 (KPKT) the chain is on the cytoplasmic side. Residues 57–81 (FLSVHRNFDEYYIIFDLILQNHYLR) traverse the membrane as a helical segment. Topologically, residues 82-106 (NYGASFTENFYSMKRIASGTGNPPN) are peroxisomal matrix. The chain crosses the membrane as a helical span at residues 107 to 128 (DGRERIMSLITLVGWPYVENKL). Residues 129 to 133 (NQLYD) are Cytoplasmic-facing. Residues 134 to 184 (RLKEVYECRSWSSINGMKAKCQKMFVIIWPYIKTALKAVKSALQLAYILNR) traverse the membrane as a helical segment. The Peroxisomal matrix portion of the chain corresponds to 185 to 253 (SSIHSPWLYF…ILGLPGIVSR (69 aa)). The chain crosses the membrane as a helical span at residues 254 to 281 (LFAYGLFFVQFLDYMYNTDLAKLTKTGL). At 282–359 (DGAIPSPPHK…NVQHLIRLFV (78 aa)) the chain is on the cytoplasmic side. 4 residues coordinate Zn(2+): cysteine 307, cysteine 310, cysteine 328, and cysteine 331. The RING-type; degenerate zinc-finger motif lies at 307 to 346 (CPICLKKRVNDTALFVSGYVFCYTCINQYVNTYNKCPVTG).

Belongs to the pex2/pex10/pex12 family. As to quaternary structure, component of the PEX2-PEX10-PEX12 retrotranslocation channel.

It is found in the peroxisome membrane. Its pathway is protein modification; protein ubiquitination. In terms of biological role, component of a retrotranslocation channel required for peroxisome organization by mediating export of the PEX5/prx-5 receptor from peroxisomes to the cytosol, thereby promoting PEX5/prx-5 recycling. The retrotranslocation channel is composed of PEX2/prx-2, PEX10/prx-10 and PEX12/prx-12; each subunit contributing transmembrane segments that coassemble into an open channel that specifically allows the passage of PEX5/prx-5 through the peroxisomal membrane. PEX12/prx-12 also regulates PEX5/prx-5 recycling by activating the E3 ubiquitin-protein ligase activity of PEX10/prx-10. When PEX5 recycling is compromised, PEX12/prx-12 stimulates PEX10-mediated polyubiquitination of PEX5/prx-5, leading to its subsequent degradation. This is Peroxisome assembly protein 12 (prx-12) from Caenorhabditis elegans.